Here is a 375-residue protein sequence, read N- to C-terminus: CC-adding tRNA nucleotidyltransferase (375 aa).

27-30 is a CTP binding site; the sequence is GAVR. Residues Asp-40 and Asp-42 each coordinate Mg(2+). Residues 95 to 96, Asn-100, 137 to 146, and Arg-177 each bind CTP; these read RD and DPLRMLRAPR.

Belongs to the tRNA nucleotidyltransferase/poly(A) polymerase family. Mg(2+) is required as a cofactor.

The enzyme catalyses a tRNA precursor + 2 CTP = a tRNA with a 3' CC end + 2 diphosphate. Its function is as follows. tRNA nucleotidyltransferase involved in the synthesis of the tRNA CCA terminus. Adds the two cytidine residues to tRNA. The chain is CC-adding tRNA nucleotidyltransferase from Halalkalibacterium halodurans (strain ATCC BAA-125 / DSM 18197 / FERM 7344 / JCM 9153 / C-125) (Bacillus halodurans).